A 354-amino-acid polypeptide reads, in one-letter code: Rhodopsin (354 aa).

Residues 1 to 36 (MNGTEGPNFYVPFSNKSGVVRSPFEYPQYYLAEPWQ) lie on the Extracellular side of the membrane. N-linked (GlcNAc...) asparagine glycans are attached at residues N2 and N15. Residues 37 to 61 (YSVLAAYMFLLILLGFPVNFLTLYV) form a helical membrane-spanning segment. Residues 62 to 73 (TIQHKKLRTPLN) are Cytoplasmic-facing. Residues 74–96 (YILLNLAFANHFMVFGGFPVTMY) traverse the membrane as a helical segment. The Extracellular segment spans residues 97-110 (SSMHGYFVFGQTGC). C110 and C187 are oxidised to a cystine. A helical membrane pass occupies residues 111-133 (YIEGFFATMGGEIALWSLVVLAI). The short motif at 134-136 (ERY) is the 'Ionic lock' involved in activated form stabilization element. The Cytoplasmic portion of the chain corresponds to 134–152 (ERYVVVCKPMSNFRFGENH). The helical transmembrane segment at 153–173 (AIMGVMMTWIMALACAAPPLF) threads the bilayer. At 174 to 202 (GWSRYIPEGMQCSCGVDYYTLKPEVNNES) the chain is on the extracellular side. A helical membrane pass occupies residues 203–224 (FVIYMFLVHFTIPLMIIFFCYG). Residues 225–252 (RLVCTVKEAAAQQQESATTQKAEKEVTR) lie on the Cytoplasmic side of the membrane. The chain crosses the membrane as a helical span at residues 253-274 (MVIIMVVAFLICWVPYASVAFY). Over 275 to 286 (IFSNQGTDFGPI) the chain is Extracellular. The helical transmembrane segment at 287 to 308 (FMTVPAFFAKSSAIYNPVIYIV) threads the bilayer. K296 carries the N6-(retinylidene)lysine modification. Residues 309–354 (LNKQFRNCMITTICCGKNPFGDDETTSAATSKTEASSVSSSQVSPA) lie on the Cytoplasmic side of the membrane. Residues C322 and C323 are each lipidated (S-palmitoyl cysteine). The segment at 332–354 (ETTSAATSKTEASSVSSSQVSPA) is disordered. The span at 334-354 (TSAATSKTEASSVSSSQVSPA) shows a compositional bias: low complexity.

The protein belongs to the G-protein coupled receptor 1 family. Opsin subfamily. In terms of processing, contains one covalently linked retinal chromophore. Upon light absorption, the covalently bound 11-cis-retinal is converted to all-trans-retinal. After hydrolysis of the Schiff base and release of the covalently bound all-trans-retinal, active rhodopsin is regenerated by binding of a fresh molecule of 11-cis-retinal.

Its subcellular location is the membrane. The protein localises to the cell projection. It localises to the cilium. The protein resides in the photoreceptor outer segment. Photoreceptor required for image-forming vision at low light intensity. Required for photoreceptor cell viability after birth. Light-induced isomerization of 11-cis to all-trans retinal triggers a conformational change that activates signaling via G-proteins. Subsequent receptor phosphorylation mediates displacement of the bound G-protein alpha subunit by arrestin and terminates signaling. The protein is Rhodopsin (RHO) of Ambystoma tigrinum (Eastern tiger salamander).